Consider the following 431-residue polypeptide: 5-methylthioadenosine/S-adenosylhomocysteine deaminase (431 aa).

2 residues coordinate Zn(2+): His68 and His70. Residues Glu97 and His186 each coordinate substrate. His213 is a Zn(2+) binding site. Substrate-binding residues include Glu216 and Asp301. Zn(2+) is bound at residue Asp301.

Belongs to the metallo-dependent hydrolases superfamily. MTA/SAH deaminase family. Zn(2+) is required as a cofactor.

It catalyses the reaction S-adenosyl-L-homocysteine + H2O + H(+) = S-inosyl-L-homocysteine + NH4(+). It carries out the reaction S-methyl-5'-thioadenosine + H2O + H(+) = S-methyl-5'-thioinosine + NH4(+). Its function is as follows. Catalyzes the deamination of 5-methylthioadenosine and S-adenosyl-L-homocysteine into 5-methylthioinosine and S-inosyl-L-homocysteine, respectively. Is also able to deaminate adenosine. This chain is 5-methylthioadenosine/S-adenosylhomocysteine deaminase, found in Halothermothrix orenii (strain H 168 / OCM 544 / DSM 9562).